The sequence spans 233 residues: DnaA regulatory inactivator Hda (233 aa).

The protein belongs to the DnaA family. HdA subfamily. As to quaternary structure, the active form seems to be an ADP-bound monomer. Forms the RIDA complex (regulatory inactivation of DnaA) of ATP-DnaA, ADP-Hda and the DNA-loaded beta sliding clamp (dnaN).

Functionally, mediates the interaction of DNA replication initiator protein DnaA with DNA polymerase subunit beta sliding clamp (dnaN). Stimulates hydrolysis of ATP-DnaA to ADP-DnaA, rendering DnaA inactive for reinitiation, a process called regulatory inhibition of DnaA or RIDA. This is DnaA regulatory inactivator Hda from Escherichia fergusonii (strain ATCC 35469 / DSM 13698 / CCUG 18766 / IAM 14443 / JCM 21226 / LMG 7866 / NBRC 102419 / NCTC 12128 / CDC 0568-73).